The chain runs to 280 residues: Four and a half LIM domains protein 3 (280 aa).

At Ser-2 the chain carries N-acetylserine. Residues 7-31 (CAKCNESLYGRKYIQTDSGPYCVPC) form a C4-type zinc finger. 2 LIM zinc-binding domains span residues 40 to 92 (CAEC…CNDC) and 101 to 153 (CSAC…CVPC). Lys-157 is subject to N6-acetyllysine. 2 LIM zinc-binding domains span residues 162 to 212 (CARC…CVAC) and 221 to 275 (CSSC…CQGC). Lys-235 carries the post-translational modification N6-acetyllysine.

Interacts with SOX15; the interaction recruits FHL3 to FOXK1 promoters where it acts as a transcriptional coactivator of FOXK1. As to expression, expressed only in skeletal muscle.

It localises to the nucleus. The protein localises to the cytoplasm. Recruited by SOX15 to FOXK1 promoters where it acts as a transcriptional coactivator of FOXK1. The protein is Four and a half LIM domains protein 3 (FHL3) of Homo sapiens (Human).